A 342-amino-acid chain; its full sequence is Phosphate acyltransferase (342 aa).

It belongs to the PlsX family. In terms of assembly, homodimer. Probably interacts with PlsY.

It is found in the cytoplasm. It carries out the reaction a fatty acyl-[ACP] + phosphate = an acyl phosphate + holo-[ACP]. Its pathway is lipid metabolism; phospholipid metabolism. Catalyzes the reversible formation of acyl-phosphate (acyl-PO(4)) from acyl-[acyl-carrier-protein] (acyl-ACP). This enzyme utilizes acyl-ACP as fatty acyl donor, but not acyl-CoA. In Alkalilimnicola ehrlichii (strain ATCC BAA-1101 / DSM 17681 / MLHE-1), this protein is Phosphate acyltransferase.